Here is a 151-residue protein sequence, read N- to C-terminus: MGSDDQSAADKIQKGFQINYMILRDADSGKIIWQENKDFSAPDVEHEARVPVKILDMRAVSREINFSTVESMENFRLDQKVLFKGRIMEEWFFEMGFVGASTTNTWQSTIEAAPESQMMPAKVLNGNVTIQTSFYDNETLITKSVVRLYYI.

This sequence belongs to the PDE6D/unc-119 family. Interacts with Pde6.

The protein resides in the nucleus. It is found in the cytoplasm. This Drosophila persimilis (Fruit fly) protein is Probable cGMP 3',5'-cyclic phosphodiesterase subunit delta.